Consider the following 198-residue polypeptide: UDP-N-acetylglucosamine transferase subunit ALG13 (198 aa).

This sequence belongs to the glycosyltransferase 28 family. As to quaternary structure, heterodimer with ALG14 to form a functional enzyme.

It localises to the endoplasmic reticulum. It catalyses the reaction an N-acetyl-alpha-D-glucosaminyl-diphospho-di-trans,poly-cis-dolichol + UDP-N-acetyl-alpha-D-glucosamine = an N,N'-diacetylchitobiosyl-diphospho-di-trans,poly-cis-dolichol + UDP + H(+). In terms of biological role, involved in protein N-glycosylation. Essential for the second step of the dolichol-linked oligosaccharide pathway. The polypeptide is UDP-N-acetylglucosamine transferase subunit ALG13 (ALG13) (Candida glabrata (strain ATCC 2001 / BCRC 20586 / JCM 3761 / NBRC 0622 / NRRL Y-65 / CBS 138) (Yeast)).